The chain runs to 205 residues: Probable thymidylate kinase (205 aa).

10–17 (GIDGSGKT) contributes to the ATP binding site.

Belongs to the thymidylate kinase family.

It carries out the reaction dTMP + ATP = dTDP + ADP. The chain is Probable thymidylate kinase (tmk) from Pyrococcus horikoshii (strain ATCC 700860 / DSM 12428 / JCM 9974 / NBRC 100139 / OT-3).